A 144-amino-acid polypeptide reads, in one-letter code: Probable DNA-directed RNA polymerases I and III subunit RPAC2 (144 aa).

Positions 14-47 (KVEAETMEVDEQPQETPQVDDEEDLNVPSKKKME) are disordered. The segment covering 18 to 38 (ETMEVDEQPQETPQVDDEEDL) has biased composition (acidic residues).

This sequence belongs to the archaeal Rpo11/eukaryotic RPB11/RPC19 RNA polymerase subunit family. As to quaternary structure, component of the RNA polymerase I (Pol I) and RNA polymerase III (Pol III) complexes consisting of at least 13 and 17 subunits, respectively.

The protein localises to the nucleus. Functionally, DNA-dependent RNA polymerase catalyzes the transcription of DNA into RNA using the four ribonucleoside triphosphates as substrates. Common core component of RNA polymerases I and III which synthesize ribosomal RNA precursors and small RNAs, such as 5S rRNA and tRNAs, respectively. This is Probable DNA-directed RNA polymerases I and III subunit RPAC2 (rpac-19) from Caenorhabditis elegans.